A 579-amino-acid chain; its full sequence is Putative ABC transporter ATP-binding protein VPA1482 (579 aa).

ABC transporter domains lie at 3 to 244 (IEFS…GIRE) and 299 to 533 (LEVR…ANLT). ATP-binding positions include 37-44 (GPSGSGKS) and 332-339 (GKNGSGKS).

It belongs to the ABC transporter superfamily.

It is found in the cell inner membrane. Its function is as follows. Probably part of an ABC transporter complex. Responsible for energy coupling to the transport system. This Vibrio parahaemolyticus serotype O3:K6 (strain RIMD 2210633) protein is Putative ABC transporter ATP-binding protein VPA1482.